A 72-amino-acid polypeptide reads, in one-letter code: DNA-directed RNA polymerase subunit omega (72 aa).

This sequence belongs to the RNA polymerase subunit omega family. As to quaternary structure, the RNAP catalytic core consists of 2 alpha, 1 beta, 1 beta' and 1 omega subunit. When a sigma factor is associated with the core the holoenzyme is formed, which can initiate transcription.

The enzyme catalyses RNA(n) + a ribonucleoside 5'-triphosphate = RNA(n+1) + diphosphate. Functionally, promotes RNA polymerase assembly. Latches the N- and C-terminal regions of the beta' subunit thereby facilitating its interaction with the beta and alpha subunits. This Clostridium tetani (strain Massachusetts / E88) protein is DNA-directed RNA polymerase subunit omega (rpoZ).